The sequence spans 228 residues: A-type ATP synthase subunit D (228 aa).

The span at 205 to 214 (KKEEEEKAEA) shows a compositional bias: basic and acidic residues. The tract at residues 205-228 (KKEEEEKAEAAAEAAAVEDPEPAD) is disordered.

This sequence belongs to the V-ATPase D subunit family. As to quaternary structure, has multiple subunits with at least A(3), B(3), C, D, E, F, H, I and proteolipid K(x).

The protein localises to the cell membrane. In terms of biological role, component of the A-type ATP synthase that produces ATP from ADP in the presence of a proton gradient across the membrane. This Halorubrum lacusprofundi (strain ATCC 49239 / DSM 5036 / JCM 8891 / ACAM 34) protein is A-type ATP synthase subunit D.